We begin with the raw amino-acid sequence, 230 residues long: Protein-L-isoaspartate O-methyltransferase 1 (230 aa).

S65 is a catalytic residue.

Belongs to the methyltransferase superfamily. L-isoaspartyl/D-aspartyl protein methyltransferase family. Monomer. As to expression, expressed in roots, rosette leaves, stems, cauline leaves, flowers and developing seeds.

It is found in the cytoplasm. The catalysed reaction is [protein]-L-isoaspartate + S-adenosyl-L-methionine = [protein]-L-isoaspartate alpha-methyl ester + S-adenosyl-L-homocysteine. Catalyzes the methyl esterification of L-isoaspartyl residues in peptides and proteins that result from spontaneous decomposition of normal L-aspartyl and L-asparaginyl residues. It plays a role in the repair and/or degradation of damaged proteins. Contributes to seed longevity and germination vigor by limiting the abnormal accumulation of the L-isoaspartyl residues in seed proteins. In Arabidopsis thaliana (Mouse-ear cress), this protein is Protein-L-isoaspartate O-methyltransferase 1 (PIMT1).